Consider the following 105-residue polypeptide: MVTQKIYIELKAFDHCLLDGSARNIILIARRSGAKVNGPVFFPRRIAKFIVNRSTHVDKKSREQFEIRTHKRLISLPKANSAILQALMSLQLPAGVDVKVKVVGG.

The protein belongs to the universal ribosomal protein uS10 family. As to quaternary structure, part of the 30S ribosomal subunit.

In terms of biological role, involved in the binding of tRNA to the ribosomes. In Anaplasma marginale (strain Florida), this protein is Small ribosomal subunit protein uS10.